Reading from the N-terminus, the 473-residue chain is Ribulose bisphosphate carboxylase large chain 3 (473 aa).

Substrate-binding residues include asparagine 116 and threonine 166. Lysine 168 serves as the catalytic Proton acceptor. Lysine 170 contributes to the substrate binding site. Mg(2+) contacts are provided by lysine 194, aspartate 196, and glutamate 197. An N6-carboxylysine modification is found at lysine 194. The active-site Proton acceptor is the histidine 287. Residues arginine 288, histidine 320, and serine 372 each coordinate substrate.

Belongs to the RuBisCO large chain family. Type I subfamily. Heterohexadecamer of 8 large chains and 8 small chains. Requires Mg(2+) as cofactor.

The catalysed reaction is 2 (2R)-3-phosphoglycerate + 2 H(+) = D-ribulose 1,5-bisphosphate + CO2 + H2O. The enzyme catalyses D-ribulose 1,5-bisphosphate + O2 = 2-phosphoglycolate + (2R)-3-phosphoglycerate + 2 H(+). RuBisCO catalyzes two reactions: the carboxylation of D-ribulose 1,5-bisphosphate, the primary event in carbon dioxide fixation, as well as the oxidative fragmentation of the pentose substrate. Both reactions occur simultaneously and in competition at the same active site. The chain is Ribulose bisphosphate carboxylase large chain 3 from Nitrobacter hamburgensis (strain DSM 10229 / NCIMB 13809 / X14).